Consider the following 133-residue polypeptide: MSSFLGKWKLSESHNFDAVMSKLGVSWATRQIGNTVTPTVTFTMDGDKMTMLTESTFKNLSCTFKFGEEFDEKTSDGRNVKSVVEKNSESKLTQTQVDPKNTTVIVREVDGDTMKTTVTVGDVTAIRNYKRLS.

(5Z,8Z,11Z,14Z)-eicosatetraenoate-binding positions include Arg-107 and 127-129 (RNY). (9Z)-octadecenoate is bound by residues Arg-107 and 127 to 129 (RNY).

The protein belongs to the calycin superfamily. Fatty-acid binding protein (FABP) family. In terms of tissue distribution, tubercles, muscle layers and body.

The protein resides in the cytoplasm. May play a role in the transport of fatty acids. Binds various fatty acids, such as arachidonic, oleic, palmitic and linolenic acid (in vitro). This chain is 14 kDa fatty acid-binding protein, found in Schistosoma mansoni (Blood fluke).